A 380-amino-acid polypeptide reads, in one-letter code: tRNA-specific 2-thiouridylase MnmA (380 aa).

Residues 12–19 (GLSGGVDS) and Met-38 each bind ATP. An interaction with target base in tRNA region spans residues 108–110 (NPD). Cys-113 functions as the Nucleophile in the catalytic mechanism. Cys-113 and Cys-210 form a disulfide bridge. Residue Gly-138 coordinates ATP. Residues 160-162 (KDQ) are interaction with tRNA. Residue Cys-210 is the Cysteine persulfide intermediate of the active site.

The protein belongs to the MnmA/TRMU family.

The protein localises to the cytoplasm. The enzyme catalyses S-sulfanyl-L-cysteinyl-[protein] + uridine(34) in tRNA + AH2 + ATP = 2-thiouridine(34) in tRNA + L-cysteinyl-[protein] + A + AMP + diphosphate + H(+). Catalyzes the 2-thiolation of uridine at the wobble position (U34) of tRNA, leading to the formation of s(2)U34. The polypeptide is tRNA-specific 2-thiouridylase MnmA (Ureaplasma urealyticum serovar 10 (strain ATCC 33699 / Western)).